Consider the following 97-residue polypeptide: Glutamyl-tRNA(Gln) amidotransferase subunit C (97 aa).

Belongs to the GatC family. As to quaternary structure, heterotrimer of A, B and C subunits.

It carries out the reaction L-glutamyl-tRNA(Gln) + L-glutamine + ATP + H2O = L-glutaminyl-tRNA(Gln) + L-glutamate + ADP + phosphate + H(+). It catalyses the reaction L-aspartyl-tRNA(Asn) + L-glutamine + ATP + H2O = L-asparaginyl-tRNA(Asn) + L-glutamate + ADP + phosphate + 2 H(+). Allows the formation of correctly charged Asn-tRNA(Asn) or Gln-tRNA(Gln) through the transamidation of misacylated Asp-tRNA(Asn) or Glu-tRNA(Gln) in organisms which lack either or both of asparaginyl-tRNA or glutaminyl-tRNA synthetases. The reaction takes place in the presence of glutamine and ATP through an activated phospho-Asp-tRNA(Asn) or phospho-Glu-tRNA(Gln). The polypeptide is Glutamyl-tRNA(Gln) amidotransferase subunit C (Sulfurisphaera tokodaii (strain DSM 16993 / JCM 10545 / NBRC 100140 / 7) (Sulfolobus tokodaii)).